Reading from the N-terminus, the 177-residue chain is Dual-action ribosomal maturation protein DarP (177 aa).

This sequence belongs to the DarP family.

It is found in the cytoplasm. Functionally, member of a network of 50S ribosomal subunit biogenesis factors which assembles along the 30S-50S interface, preventing incorrect 23S rRNA structures from forming. Promotes peptidyl transferase center (PTC) maturation. This is Dual-action ribosomal maturation protein DarP from Glaesserella parasuis serovar 5 (strain SH0165) (Haemophilus parasuis).